The primary structure comprises 156 residues: Small ribosomal subunit protein uS7 (156 aa).

It belongs to the universal ribosomal protein uS7 family. As to quaternary structure, part of the 30S ribosomal subunit. Contacts proteins S9 and S11.

Its function is as follows. One of the primary rRNA binding proteins, it binds directly to 16S rRNA where it nucleates assembly of the head domain of the 30S subunit. Is located at the subunit interface close to the decoding center, probably blocks exit of the E-site tRNA. This is Small ribosomal subunit protein uS7 from Leptothrix cholodnii (strain ATCC 51168 / LMG 8142 / SP-6) (Leptothrix discophora (strain SP-6)).